Consider the following 338-residue polypeptide: 26S proteasome non-ATPase regulatory subunit 7 (338 aa).

Residues 11–147 (VIVHPLVLLS…TEAYISVEEV (137 aa)) form the MPN domain. The segment at 286–338 (RDAEEGKSDSKEAKEKNKDSKDKDNKETKDKDGKKAEEKADKGKDEGGKGSRK) is disordered.

Belongs to the peptidase M67A family.

Acts as a regulatory subunit of the 26S proteasome which is involved in the ATP-dependent degradation of ubiquitinated proteins. The sequence is that of 26S proteasome non-ATPase regulatory subunit 7 (Rpn8) from Drosophila melanogaster (Fruit fly).